Consider the following 156-residue polypeptide: MNLNATLFAQMVVFLVLAWFTMKFVWPPLINALDERSKKIADGLAAAEKGKAELDAAHKRVDQELAQARNDGQQRIADAEKRAQAVAEEIKANAQAEAARIVAQAKAEAEQQIVKARETLRGEVAALAVKGAEQILKREVDQTAHAQLLNQLKAEL.

The helical transmembrane segment at 7-29 threads the bilayer; the sequence is LFAQMVVFLVLAWFTMKFVWPPL.

The protein belongs to the ATPase B chain family. In terms of assembly, F-type ATPases have 2 components, F(1) - the catalytic core - and F(0) - the membrane proton channel. F(1) has five subunits: alpha(3), beta(3), gamma(1), delta(1), epsilon(1). F(0) has three main subunits: a(1), b(2) and c(10-14). The alpha and beta chains form an alternating ring which encloses part of the gamma chain. F(1) is attached to F(0) by a central stalk formed by the gamma and epsilon chains, while a peripheral stalk is formed by the delta and b chains.

It localises to the cell inner membrane. Its function is as follows. F(1)F(0) ATP synthase produces ATP from ADP in the presence of a proton or sodium gradient. F-type ATPases consist of two structural domains, F(1) containing the extramembraneous catalytic core and F(0) containing the membrane proton channel, linked together by a central stalk and a peripheral stalk. During catalysis, ATP synthesis in the catalytic domain of F(1) is coupled via a rotary mechanism of the central stalk subunits to proton translocation. Component of the F(0) channel, it forms part of the peripheral stalk, linking F(1) to F(0). The chain is ATP synthase subunit b from Burkholderia vietnamiensis (strain G4 / LMG 22486) (Burkholderia cepacia (strain R1808)).